The following is a 314-amino-acid chain: Homoserine O-succinyltransferase (314 aa).

Residue Cys-142 is the Acyl-thioester intermediate of the active site. The substrate site is built by Lys-163 and Ser-192. The Proton acceptor role is filled by His-235. Residue Glu-237 is part of the active site. Arg-249 contacts substrate.

It belongs to the MetA family.

The protein localises to the cytoplasm. It carries out the reaction L-homoserine + succinyl-CoA = O-succinyl-L-homoserine + CoA. It participates in amino-acid biosynthesis; L-methionine biosynthesis via de novo pathway; O-succinyl-L-homoserine from L-homoserine: step 1/1. Functionally, transfers a succinyl group from succinyl-CoA to L-homoserine, forming succinyl-L-homoserine. The polypeptide is Homoserine O-succinyltransferase (Aeromonas salmonicida (strain A449)).